The following is a 56-amino-acid chain: Small ribosomal subunit protein uS14A (56 aa).

Zn(2+)-binding residues include C21 and C24. Residue S25 is modified to Phosphoserine. 2 residues coordinate Zn(2+): C39 and C42.

The protein belongs to the universal ribosomal protein uS14 family. As to quaternary structure, component of the small ribosomal subunit (SSU). Mature yeast ribosomes consist of a small (40S) and a large (60S) subunit. The 40S small subunit contains 1 molecule of ribosomal RNA (18S rRNA) and 33 different proteins (encoded by 57 genes). The large 60S subunit contains 3 rRNA molecules (25S, 5.8S and 5S rRNA) and 46 different proteins (encoded by 81 genes). Requires Zn(2+) as cofactor.

It localises to the cytoplasm. Component of the ribosome, a large ribonucleoprotein complex responsible for the synthesis of proteins in the cell. The small ribosomal subunit (SSU) binds messenger RNAs (mRNAs) and translates the encoded message by selecting cognate aminoacyl-transfer RNA (tRNA) molecules. The large subunit (LSU) contains the ribosomal catalytic site termed the peptidyl transferase center (PTC), which catalyzes the formation of peptide bonds, thereby polymerizing the amino acids delivered by tRNAs into a polypeptide chain. The nascent polypeptides leave the ribosome through a tunnel in the LSU and interact with protein factors that function in enzymatic processing, targeting, and the membrane insertion of nascent chains at the exit of the ribosomal tunnel. The sequence is that of Small ribosomal subunit protein uS14A from Saccharomyces cerevisiae (strain ATCC 204508 / S288c) (Baker's yeast).